Consider the following 164-residue polypeptide: Ubiquitin-conjugating enzyme E2 2 (164 aa).

The UBC core domain occupies P4–E150. C88 (glycyl thioester intermediate) is an active-site residue.

This sequence belongs to the ubiquitin-conjugating enzyme family.

It localises to the cytoplasm. It is found in the nucleus. The catalysed reaction is S-ubiquitinyl-[E1 ubiquitin-activating enzyme]-L-cysteine + [E2 ubiquitin-conjugating enzyme]-L-cysteine = [E1 ubiquitin-activating enzyme]-L-cysteine + S-ubiquitinyl-[E2 ubiquitin-conjugating enzyme]-L-cysteine.. The protein operates within protein modification; protein ubiquitination. Functionally, catalyzes the covalent attachment of ubiquitin to other proteins. Plays a role in transcription regulation by catalyzing the monoubiquitination of histone H2B to form H2BK123ub1. H2BK123ub1 gives a specific tag for epigenetic transcriptional activation and is also a prerequisite for H3K4me and H3K79me formation. Also involved in postreplication repair of UV-damaged DNA, in N-end rule-dependent protein degradation and in sporulation. The protein is Ubiquitin-conjugating enzyme E2 2 (UBC2) of Kluyveromyces lactis (strain ATCC 8585 / CBS 2359 / DSM 70799 / NBRC 1267 / NRRL Y-1140 / WM37) (Yeast).